Consider the following 142-residue polypeptide: Transcriptional regulator MraZ (142 aa).

2 consecutive SpoVT-AbrB domains span residues 5–47 (NYQH…TNQE) and 76–119 (SLTV…DINA).

The protein belongs to the MraZ family. In terms of assembly, forms oligomers.

Its subcellular location is the cytoplasm. It localises to the nucleoid. The chain is Transcriptional regulator MraZ from Mycoplasmoides gallisepticum (strain R(low / passage 15 / clone 2)) (Mycoplasma gallisepticum).